Consider the following 172-residue polypeptide: MIDSDGFRANVGIIICNKFGQVMWARRFGQHSWQFPQGGLDDGESVEEAMYRELYEEVGLRPEHVQILTSTRSWLRYRLPKRLVRQESKPVCIGQKQKWFLLQLKGHDNTINLNSSGHPEFDDWRWVSYWYPVRQVVSFKRDVYRKVMKEFASTTLALQTREFSKKRSKQRS.

Positions 6-149 (GFRANVGIII…KRDVYRKVMK (144 aa)) constitute a Nudix hydrolase domain. A Nudix box motif is present at residues 38–59 (GGLDDGESVEEAMYRELYEEVG).

This sequence belongs to the Nudix hydrolase family. RppH subfamily. It depends on a divalent metal cation as a cofactor.

Functionally, accelerates the degradation of transcripts by removing pyrophosphate from the 5'-end of triphosphorylated RNA, leading to a more labile monophosphorylated state that can stimulate subsequent ribonuclease cleavage. This is RNA pyrophosphohydrolase from Shewanella frigidimarina (strain NCIMB 400).